Consider the following 437-residue polypeptide: Serine hydroxymethyltransferase (437 aa).

Residues Leu-130 and Gly-134–Leu-136 each bind (6S)-5,6,7,8-tetrahydrofolate. N6-(pyridoxal phosphate)lysine is present on Lys-239.

It belongs to the SHMT family. Homodimer. Pyridoxal 5'-phosphate serves as cofactor.

The protein resides in the cytoplasm. It carries out the reaction (6R)-5,10-methylene-5,6,7,8-tetrahydrofolate + glycine + H2O = (6S)-5,6,7,8-tetrahydrofolate + L-serine. Its pathway is one-carbon metabolism; tetrahydrofolate interconversion. The protein operates within amino-acid biosynthesis; glycine biosynthesis; glycine from L-serine: step 1/1. In terms of biological role, catalyzes the reversible interconversion of serine and glycine with tetrahydrofolate (THF) serving as the one-carbon carrier. This reaction serves as the major source of one-carbon groups required for the biosynthesis of purines, thymidylate, methionine, and other important biomolecules. Also exhibits THF-independent aldolase activity toward beta-hydroxyamino acids, producing glycine and aldehydes, via a retro-aldol mechanism. This Bartonella quintana (strain Toulouse) (Rochalimaea quintana) protein is Serine hydroxymethyltransferase.